We begin with the raw amino-acid sequence, 982 residues long: Nitrate reductase [NADPH] (982 aa).

The disordered stretch occupies residues 1 to 128 (MEAPALEQRQ…PPSTRLTTIL (128 aa)). The span at 10-20 (QSLHDSSERQQ) shows a compositional bias: basic and acidic residues. Low complexity predominate over residues 63–110 (TASPTTTDFSSSSSDDNSTTLETSVNYSHSSNTNTNTSCPPSPITSSS). Cysteine 240 contributes to the Mo-molybdopterin binding site. Residues 617–692 (TRLITLEELR…MPTYHIGTLT (76 aa)) enclose the Cytochrome b5 heme-binding domain. 2 residues coordinate heme: histidine 652 and histidine 675. In terms of domain architecture, FAD-binding FR-type spans 721–836 (KTWNSAILTF…KGPVGKFVYQ (116 aa)). FAD is bound by residues 776 to 779 (RAYT), 794 to 798 (LVKIY), 810 to 812 (QMT), serine 860, and threonine 863. Residue 952 to 961 (MVLLCGPEGM) participates in NADP(+) binding.

It belongs to the nitrate reductase family. In terms of assembly, homodimer. Requires FAD as cofactor. Heme is required as a cofactor. It depends on Mo-molybdopterin as a cofactor.

The enzyme catalyses nitrite + NADP(+) + H2O = nitrate + NADPH + H(+). Its pathway is nitrogen metabolism; nitrate reduction (assimilation). In terms of biological role, nitrate reductase is a key enzyme involved in the first step of nitrate assimilation in plants, fungi and bacteria. The protein is Nitrate reductase [NADPH] (nit-3) of Neurospora crassa (strain ATCC 24698 / 74-OR23-1A / CBS 708.71 / DSM 1257 / FGSC 987).